Consider the following 532-residue polypeptide: Glucose-6-phosphate isomerase (532 aa).

The active-site Proton donor is the glutamate 330. Catalysis depends on residues histidine 359 and lysine 460.

This sequence belongs to the GPI family.

Its subcellular location is the cytoplasm. The enzyme catalyses alpha-D-glucose 6-phosphate = beta-D-fructose 6-phosphate. The protein operates within carbohydrate biosynthesis; gluconeogenesis. Its pathway is carbohydrate degradation; glycolysis; D-glyceraldehyde 3-phosphate and glycerone phosphate from D-glucose: step 2/4. Its function is as follows. Catalyzes the reversible isomerization of glucose-6-phosphate to fructose-6-phosphate. This chain is Glucose-6-phosphate isomerase, found in Prochlorococcus marinus (strain MIT 9211).